We begin with the raw amino-acid sequence, 493 residues long: MGTFFVDFYNEYPDTSYIKIPTNPLDRVIGQDDAVKIAMVAAKQRRHLLLVGPPGVGKSMIAQAMSFYIDRPTEEIRVVHNPQYPERPFVEIKTREEVMAEREEETSTSGIIIDPKDAPTSVAERLGYRCSKCGFYSSPSDAVCPNCNSPKIQMGTQGPFGDVFNVIGAAFGVQNNLDKVTLTRRNGDHDEIIVYERYNDKIRVLDEKTLERRRRLEKKSPSKTIVPIDRNPFVLATGASETELLGDVRHDPYGGHPQLGTLPYERVIAGAVHEAHQGVLFIDEITHLGNLQRYILTAMQEKTFPITGRNPQSAGASVRVDKVPADFILVAACNINDLPYILSPLRSRIVGNGYEILMKTTMKDTDENRMKYLQFISQEITMDGKIPHMTMEAAELIIEEGKKRARIIDKKNNELTLRLRELGGLIRAAGDIAVFKGNKLIEKEDVEEAIKLYVPVEEKITKEYGSMAAAYSSENTTSQKDFYNYNLDDRSYE.

ATP is bound at residue 52–59 (GPPGVGKS).

The protein belongs to the peptidase S16 family.

This is Putative lon protease homolog from Thermoplasma acidophilum (strain ATCC 25905 / DSM 1728 / JCM 9062 / NBRC 15155 / AMRC-C165).